A 328-amino-acid polypeptide reads, in one-letter code: Biotin synthase (328 aa).

The 228-residue stretch at 48 to 275 (NRIQLSKLLN…KSHVRLTAGR (228 aa)) folds into the Radical SAM core domain. [4Fe-4S] cluster is bound by residues cysteine 63, cysteine 67, and cysteine 70. [2Fe-2S] cluster is bound by residues cysteine 107, cysteine 138, cysteine 198, and arginine 270.

This sequence belongs to the radical SAM superfamily. Biotin synthase family. Homodimer. [4Fe-4S] cluster is required as a cofactor. [2Fe-2S] cluster serves as cofactor.

The enzyme catalyses (4R,5S)-dethiobiotin + (sulfur carrier)-SH + 2 reduced [2Fe-2S]-[ferredoxin] + 2 S-adenosyl-L-methionine = (sulfur carrier)-H + biotin + 2 5'-deoxyadenosine + 2 L-methionine + 2 oxidized [2Fe-2S]-[ferredoxin]. It participates in cofactor biosynthesis; biotin biosynthesis; biotin from 7,8-diaminononanoate: step 2/2. Catalyzes the conversion of dethiobiotin (DTB) to biotin by the insertion of a sulfur atom into dethiobiotin via a radical-based mechanism. The sequence is that of Biotin synthase from Brucella abortus (strain S19).